The following is a 210-amino-acid chain: Outer-membrane lipoprotein carrier protein (210 aa).

The N-terminal stretch at M1–A23 is a signal peptide.

The protein belongs to the LolA family. Monomer.

It is found in the periplasm. Its function is as follows. Participates in the translocation of lipoproteins from the inner membrane to the outer membrane. Only forms a complex with a lipoprotein if the residue after the N-terminal Cys is not an aspartate (The Asp acts as a targeting signal to indicate that the lipoprotein should stay in the inner membrane). The sequence is that of Outer-membrane lipoprotein carrier protein from Xylella fastidiosa (strain Temecula1 / ATCC 700964).